The following is a 91-amino-acid chain: Large ribosomal subunit protein bL27 (91 aa).

The tract at residues 1 to 21 (MAHKKAGGSSRNGRDSESKRL) is disordered.

Belongs to the bacterial ribosomal protein bL27 family.

This is Large ribosomal subunit protein bL27 from Azoarcus sp. (strain BH72).